The following is a 20-amino-acid chain: Chemoheterotroph-specific protein (20 aa).

In Thiomonas delicata (Thiomonas cuprina), this protein is Chemoheterotroph-specific protein.